Reading from the N-terminus, the 236-residue chain is Ribose-5-phosphate isomerase A (236 aa).

Substrate contacts are provided by residues 28-31, 83-86, and 96-99; these read TGST, DGAD, and KGGG. E105 serves as the catalytic Proton acceptor. K123 lines the substrate pocket.

This sequence belongs to the ribose 5-phosphate isomerase family. In terms of assembly, homodimer.

The enzyme catalyses aldehydo-D-ribose 5-phosphate = D-ribulose 5-phosphate. It functions in the pathway carbohydrate degradation; pentose phosphate pathway; D-ribose 5-phosphate from D-ribulose 5-phosphate (non-oxidative stage): step 1/1. In terms of biological role, catalyzes the reversible conversion of ribose-5-phosphate to ribulose 5-phosphate. In Afipia carboxidovorans (strain ATCC 49405 / DSM 1227 / KCTC 32145 / OM5) (Oligotropha carboxidovorans), this protein is Ribose-5-phosphate isomerase A.